A 335-amino-acid chain; its full sequence is Ketol-acid reductoisomerase (NADP(+)) (335 aa).

One can recognise a KARI N-terminal Rossmann domain in the interval 5-185; the sequence is SKIYTDNDAN…GATRAGVIPT (181 aa). Residues 28 to 31, S56, and 86 to 89 each bind NADP(+); these read YGSQ and DMVQ. The active site involves H111. G137 lines the NADP(+) pocket. One can recognise a KARI C-terminal knotted domain in the interval 186–331; it reads TFKEETETDL…NQLRDLVQKG (146 aa). Residues D194, E198, E230, and E234 each coordinate Mg(2+). Residue S255 coordinates substrate.

This sequence belongs to the ketol-acid reductoisomerase family. The cofactor is Mg(2+).

It carries out the reaction (2R)-2,3-dihydroxy-3-methylbutanoate + NADP(+) = (2S)-2-acetolactate + NADPH + H(+). The catalysed reaction is (2R,3R)-2,3-dihydroxy-3-methylpentanoate + NADP(+) = (S)-2-ethyl-2-hydroxy-3-oxobutanoate + NADPH + H(+). It functions in the pathway amino-acid biosynthesis; L-isoleucine biosynthesis; L-isoleucine from 2-oxobutanoate: step 2/4. The protein operates within amino-acid biosynthesis; L-valine biosynthesis; L-valine from pyruvate: step 2/4. Its function is as follows. Involved in the biosynthesis of branched-chain amino acids (BCAA). Catalyzes an alkyl-migration followed by a ketol-acid reduction of (S)-2-acetolactate (S2AL) to yield (R)-2,3-dihydroxy-isovalerate. In the isomerase reaction, S2AL is rearranged via a Mg-dependent methyl migration to produce 3-hydroxy-3-methyl-2-ketobutyrate (HMKB). In the reductase reaction, this 2-ketoacid undergoes a metal-dependent reduction by NADPH to yield (R)-2,3-dihydroxy-isovalerate. The protein is Ketol-acid reductoisomerase (NADP(+)) of Saccharolobus solfataricus (strain ATCC 35092 / DSM 1617 / JCM 11322 / P2) (Sulfolobus solfataricus).